A 144-amino-acid polypeptide reads, in one-letter code: Probable low molecular weight protein-tyrosine-phosphatase AmsI (144 aa).

The active-site Nucleophile is the C9. R15 is an active-site residue. D115 (proton donor) is an active-site residue.

Belongs to the low molecular weight phosphotyrosine protein phosphatase family.

It catalyses the reaction O-phospho-L-tyrosyl-[protein] + H2O = L-tyrosyl-[protein] + phosphate. Its function is as follows. May function as a phosphatase required for amylovoran (an exopolysaccharide that functions as a virulence factor) production. This chain is Probable low molecular weight protein-tyrosine-phosphatase AmsI (amsI), found in Erwinia amylovora (Fire blight bacteria).